A 650-amino-acid polypeptide reads, in one-letter code: Probable basic-leucine zipper transcription factor K (650 aa).

Residues 37 to 180 (IDNNNNNYSN…KQQKQQQQEQ (144 aa)) are a coiled coil. Disordered stretches follow at residues 109–130 (IPQQ…QEQE) and 242–279 (TTLN…NNNL). Acidic residues predominate over residues 118 to 129 (DQQEDQDQEQEQ). The span at 242 to 251 (TTLNTNLQSD) shows a compositional bias: polar residues. Positions 252–278 (NNNNNNNNNNNNNNNNNNNNNNNNNNN) are enriched in low complexity. Positions 259–286 (NNNNNNNNNNNNNNNNNNNNLLNEKQIE) form a coiled coil. Residues 305–368 (FNKIEKGKRN…IEIMRSEPES (64 aa)) enclose the bZIP domain. The tract at residues 307–327 (KIEKGKRNQTESSKNFRERKK) is basic motif. Residues 330 to 337 (IKDIELKL) are leucine-zipper. Low complexity predominate over residues 452–466 (NNNNNNNNNNNNNNN). Residues 452–473 (NNNNNNNNNNNNNNNDNDDDNE) are disordered.

It belongs to the bZIP family.

It localises to the nucleus. Functionally, probable transcriptional regulator. The polypeptide is Probable basic-leucine zipper transcription factor K (bzpK) (Dictyostelium discoideum (Social amoeba)).